A 351-amino-acid chain; its full sequence is Cytochrome c biogenesis protein CcsA (351 aa).

8 helical membrane passes run 12–32 (NISF…AAFP), 37–57 (LSIL…TLLG), 68–88 (ISNL…IHLI), 97–117 (LVGV…ALTL), 143–163 (MMLS…FLII), 259–279 (IIGL…VWAN), 294–314 (WALI…TKGW), and 320–340 (AILA…VNLL).

Belongs to the CcmF/CycK/Ccl1/NrfE/CcsA family. May interact with ccs1.

It is found in the cellular thylakoid membrane. In terms of biological role, required during biogenesis of c-type cytochromes (cytochrome c6 and cytochrome f) at the step of heme attachment. This chain is Cytochrome c biogenesis protein CcsA, found in Trichodesmium erythraeum (strain IMS101).